Here is a 107-residue protein sequence, read N- to C-terminus: Small ribosomal subunit protein bS6 (107 aa).

It belongs to the bacterial ribosomal protein bS6 family.

Its function is as follows. Binds together with bS18 to 16S ribosomal RNA. This is Small ribosomal subunit protein bS6 from Synechococcus elongatus (strain ATCC 33912 / PCC 7942 / FACHB-805) (Anacystis nidulans R2).